Here is a 21-residue protein sequence, read N- to C-terminus: Protopolybiakinin-1 (21 aa).

Over residues 1–11 (DKNKKPIRVGG) the composition is skewed to basic residues. Positions 1–21 (DKNKKPIRVGGRRPPGFTPFR) are disordered.

It belongs to the bradykinin-related peptide family. In terms of tissue distribution, expressed by the venom gland.

It localises to the secreted. In terms of biological role, causes constriction of the isolated rat ileum muscles (is 13-fold less potent than bradykinin (BK)), as well as degranulation of mast cells (is 7-fold more potent than BK). In vivo, causes algesic effects. Muscle constriction and algesic effects are partially mediated by bradykinin receptors B2 (BDKRB2). This chain is Protopolybiakinin-1, found in Protopolybia exigua (Neotropical social wasp).